Reading from the N-terminus, the 425-residue chain is Dipeptidase tcpJ (425 aa).

Residues H46, D48, and E158 each coordinate Zn(2+). Positions 185, 259, and 318 each coordinate substrate.

It belongs to the metallo-dependent hydrolases superfamily. Peptidase M19 family. It depends on Zn(2+) as a cofactor.

The catalysed reaction is an L-aminoacyl-L-amino acid + H2O = 2 an L-alpha-amino acid. Functionally, dipeptidase; part of the gene cluster that mediates the biosynthesis of an unusual class of epipolythiodioxopiperazines (ETPs) lacking the reactive thiol group important for toxicity. Firstly, L-tyrosine is prenylated by tcpD, before undergoing condensation with L-glycine in a reaction catalyzed by the NRPS tcpP leading to the diketopiperazine (DKP) backbone. Afterwards the alpha-carbon of tyrosine is oxidized by the cytochrome P450 tcpC to form a hydroxyl group. However, in contrast other ETP biosynthesis pathways studied so far, tcpC is not able to bishydroxylate the DKP at both alpha-carbon positions, but hydroxylates the alpha-carbon of the tyrosine part and the nitrogen of the glycine part. The next steps involve an alpha,beta-elimination reaction catalyzed by tcpI, a methylation by the methyltransferase tcpN the action of the four enzyme cascade tcpG/K/J/I. Due to a dysfunctional cytochrome P450 monooxygenase tcpC, the pathway leads to the biosynthesis of probable non-toxic metabolites lacking the reactive thiol group. The polypeptide is Dipeptidase tcpJ (Claviceps purpurea (strain 20.1) (Ergot fungus)).